A 139-amino-acid chain; its full sequence is ATP synthase epsilon chain (139 aa).

Belongs to the ATPase epsilon chain family. F-type ATPases have 2 components, CF(1) - the catalytic core - and CF(0) - the membrane proton channel. CF(1) has five subunits: alpha(3), beta(3), gamma(1), delta(1), epsilon(1). CF(0) has three main subunits: a, b and c.

It localises to the cell inner membrane. Its function is as follows. Produces ATP from ADP in the presence of a proton gradient across the membrane. The sequence is that of ATP synthase epsilon chain from Enterobacter sp. (strain 638).